Reading from the N-terminus, the 156-residue chain is Ribosomal RNA large subunit methyltransferase H (156 aa).

Residues leucine 73, glycine 104, and 123 to 128 (LSSLTL) each bind S-adenosyl-L-methionine.

This sequence belongs to the RNA methyltransferase RlmH family. Homodimer.

Its subcellular location is the cytoplasm. It catalyses the reaction pseudouridine(1915) in 23S rRNA + S-adenosyl-L-methionine = N(3)-methylpseudouridine(1915) in 23S rRNA + S-adenosyl-L-homocysteine + H(+). Specifically methylates the pseudouridine at position 1915 (m3Psi1915) in 23S rRNA. This chain is Ribosomal RNA large subunit methyltransferase H, found in Neisseria gonorrhoeae (strain NCCP11945).